A 305-amino-acid chain; its full sequence is Oxygen-dependent coproporphyrinogen-III oxidase (305 aa).

Position 98 (Ser98) interacts with substrate. Residues His102 and His112 each contribute to the a divalent metal cation site. The Proton donor role is filled by His112. 114-116 (NVR) contacts substrate. A divalent metal cation contacts are provided by His151 and His181. The segment at 246 to 281 (YVEFNLVYDRGTLFGLQSGGRTESILMSMPPLARWE) is important for dimerization. Residue 264–266 (GGR) participates in substrate binding.

The protein belongs to the aerobic coproporphyrinogen-III oxidase family. In terms of assembly, homodimer. The cofactor is a divalent metal cation.

It is found in the cytoplasm. The catalysed reaction is coproporphyrinogen III + O2 + 2 H(+) = protoporphyrinogen IX + 2 CO2 + 2 H2O. It functions in the pathway porphyrin-containing compound metabolism; protoporphyrin-IX biosynthesis; protoporphyrinogen-IX from coproporphyrinogen-III (O2 route): step 1/1. Involved in the heme biosynthesis. Catalyzes the aerobic oxidative decarboxylation of propionate groups of rings A and B of coproporphyrinogen-III to yield the vinyl groups in protoporphyrinogen-IX. This Vibrio vulnificus (strain YJ016) protein is Oxygen-dependent coproporphyrinogen-III oxidase.